The chain runs to 213 residues: Probable GTP-binding protein EngB (213 aa).

Residues 30–204 (EGFEVAFAGR…YTALAGWMEL (175 aa)) form the EngB-type G domain. GTP contacts are provided by residues 38–45 (GRSNAGKS), 64–68 (GRTQL), 82–85 (DLPG), 149–152 (TKAD), and 182–185 (LFSA). Mg(2+) contacts are provided by Ser-45 and Thr-66.

This sequence belongs to the TRAFAC class TrmE-Era-EngA-EngB-Septin-like GTPase superfamily. EngB GTPase family. It depends on Mg(2+) as a cofactor.

In terms of biological role, necessary for normal cell division and for the maintenance of normal septation. The protein is Probable GTP-binding protein EngB of Pseudomonas fluorescens (strain SBW25).